The primary structure comprises 141 residues: Transcriptional regulator MraZ (141 aa).

SpoVT-AbrB domains lie at 5-47 (EFEH…PAER) and 76-119 (AAEC…GAEH).

This sequence belongs to the MraZ family. Forms oligomers.

The protein resides in the cytoplasm. The protein localises to the nucleoid. The protein is Transcriptional regulator MraZ of Lactiplantibacillus plantarum (strain ATCC BAA-793 / NCIMB 8826 / WCFS1) (Lactobacillus plantarum).